A 161-amino-acid chain; its full sequence is Nucleotide-binding protein XAC3671 (161 aa).

This sequence belongs to the YajQ family.

Nucleotide-binding protein. The polypeptide is Nucleotide-binding protein XAC3671 (Xanthomonas axonopodis pv. citri (strain 306)).